A 146-amino-acid chain; its full sequence is Snaclec 4 (146 aa).

The N-terminal stretch at 1 to 23 is a signal peptide; that stretch reads MGRFISISFGLLVVFLSLSGTEA. Disulfide bonds link Cys-27–Cys-38, Cys-55–Cys-144, and Cys-121–Cys-136. Positions 34–145 constitute a C-type lectin domain; it reads YDQNCYKVFT…CNFIAPVVCK (112 aa).

It belongs to the snaclec family. Heterodimer; disulfide-linked.

Its subcellular location is the secreted. Its function is as follows. Interferes with one step of hemostasis (modulation of platelet aggregation, or coagulation cascade, for example). The polypeptide is Snaclec 4 (Daboia siamensis (Eastern Russel's viper)).